Here is an 84-residue protein sequence, read N- to C-terminus: Putative lipoprotein RzoQ (84 aa).

Positions 1–22 (MRNRNLLKFLPGLLICLIVLTS) are cleaved as a signal peptide. The N-palmitoyl cysteine moiety is linked to residue C23. C23 carries S-diacylglycerol cysteine lipidation.

It is found in the cell membrane. This is Putative lipoprotein RzoQ (rzoQ) from Escherichia coli (strain K12).